A 1226-amino-acid chain; its full sequence is Arf guanine nucleotide exchange factor SYT1 (1226 aa).

Disordered stretches follow at residues 17-39 (HSND…DKLR) and 113-158 (RNGQ…RNSK). The segment covering 131–142 (SIEKVPKPDGER) has biased composition (basic and acidic residues). T277 carries the post-translational modification Phosphothreonine. Disordered regions lie at residues 311 to 405 (NSLM…TGMS), 954 to 1022 (STGS…NEDY), and 1178 to 1198 (LEHG…DGID). Polar residues predominate over residues 349–360 (LSRSRSQSTSFV). The residue at position 369 (S369) is a Phosphoserine. The segment covering 386–405 (GPTSVYNNKSNANSTITGMS) has biased composition (polar residues). Residues 405–620 (SRRSSSIVNA…TYFYENVTAK (216 aa)) form the SEC7 domain. The PH domain occupies 844–1074 (ILQMGAIMNL…DSINLFSAYD (231 aa)). Low complexity-rich tracts occupy residues 956 to 969 (GSHT…SSSA) and 994 to 1017 (SSVS…SSND).

The protein resides in the cytoplasm. Its activity is regulated as follows. Inhibited by brefeldin A. Functionally, guanine nucleotide exchange factor for Arf GTPases, stimulating the nucleotide exchange from the GDP-bound to the GTP-bound form. Catalyzes both the GDP release by and the GTP binding to ARF2. Has no exchange activity on Rab GTPases. Involved in vesicular transport. This chain is Arf guanine nucleotide exchange factor SYT1 (SYT1), found in Saccharomyces cerevisiae (strain ATCC 204508 / S288c) (Baker's yeast).